A 214-amino-acid polypeptide reads, in one-letter code: Peptide methionine sulfoxide reductase B1, chloroplastic (214 aa).

A chloroplast-targeting transit peptide spans 1–53 (MAMRQYAAATAASSSFRARPRARPSCLPAAALPLAPCCGVAWSRASYRRASVR). Low complexity predominate over residues 58–81 (ASSSSSSSSSSPSPQGQAQAQAQG). The segment at 58 to 91 (ASSSSSSSSSSPSPQGQAQAQAQGKPNYSTSLTD) is disordered. The region spanning 91–213 (DEEWRKRLTK…NSASLKLKKT (123 aa)) is the MsrB domain. Positions 130, 133, 179, and 182 each coordinate Zn(2+). Cys202 (nucleophile) is an active-site residue.

Belongs to the MsrB Met sulfoxide reductase family. Zn(2+) serves as cofactor. In terms of tissue distribution, expressed in leaves and flowers.

The protein localises to the plastid. It is found in the chloroplast. It catalyses the reaction L-methionyl-[protein] + [thioredoxin]-disulfide + H2O = L-methionyl-(R)-S-oxide-[protein] + [thioredoxin]-dithiol. In terms of biological role, catalyzes the reduction of methionine sulfoxide (MetSO) to methionine in proteins. Involved in abiotic stress response. Plays a protective role against oxidative stress by restoring activity to proteins that have been inactivated by methionine oxidation. MSRB family specifically reduces the MetSO R-enantiomer. In Oryza sativa subsp. japonica (Rice), this protein is Peptide methionine sulfoxide reductase B1, chloroplastic.